The following is a 91-amino-acid chain: Putative 26S proteasome complex subunit sem-1 (91 aa).

Residues 1-73 form a disordered region; the sequence is MASTQPKNDA…SWDDDDTSDD (73 aa). Positions 8 to 28 are enriched in basic and acidic residues; the sequence is NDAKSTEPKPEQPVTEKKTAV. Composition is skewed to acidic residues over residues 29–48 and 63–72; these read LEEDDEFEDFPVDDWEAEDT and ESWDDDDTSD.

Belongs to the DSS1/SEM1 family. In terms of assembly, part of the 26S proteasome.

In terms of biological role, subunit of the 26S proteasome which plays a role in ubiquitin-dependent proteolysis. The sequence is that of Putative 26S proteasome complex subunit sem-1 (sem-1) from Neurospora crassa (strain ATCC 24698 / 74-OR23-1A / CBS 708.71 / DSM 1257 / FGSC 987).